A 462-amino-acid chain; its full sequence is Cysteine--tRNA ligase (462 aa).

C30 is a Zn(2+) binding site. Residues 32 to 42 (PTVYDRAHLGN) carry the 'HIGH' region motif. Residues C221, H246, and E250 each coordinate Zn(2+). Residues 279–283 (KMSKS) carry the 'KMSKS' region motif. An ATP-binding site is contributed by K282.

It belongs to the class-I aminoacyl-tRNA synthetase family. Monomer. Zn(2+) serves as cofactor.

It localises to the cytoplasm. It catalyses the reaction tRNA(Cys) + L-cysteine + ATP = L-cysteinyl-tRNA(Cys) + AMP + diphosphate. This Paracoccus denitrificans (strain Pd 1222) protein is Cysteine--tRNA ligase.